Consider the following 92-residue polypeptide: Small ribosomal subunit protein uS19 (92 aa).

The protein belongs to the universal ribosomal protein uS19 family.

Its function is as follows. Protein S19 forms a complex with S13 that binds strongly to the 16S ribosomal RNA. This chain is Small ribosomal subunit protein uS19, found in Rippkaea orientalis (strain PCC 8801 / RF-1) (Cyanothece sp. (strain PCC 8801)).